A 582-amino-acid chain; its full sequence is 2-isopropylmalate synthase (582 aa).

In terms of domain architecture, Pyruvate carboxyltransferase spans 40–314 (PRWCAVDLRD…DPMIDFSDID (275 aa)). The Mg(2+) site is built by D49, H253, H255, and N289. Residues 456-582 (SPAGHPGGQW…NRAIRDNQVD (127 aa)) form a regulatory domain region.

It belongs to the alpha-IPM synthase/homocitrate synthase family. LeuA type 2 subfamily. In terms of assembly, homodimer. Mg(2+) serves as cofactor.

The protein localises to the cytoplasm. The catalysed reaction is 3-methyl-2-oxobutanoate + acetyl-CoA + H2O = (2S)-2-isopropylmalate + CoA + H(+). It functions in the pathway amino-acid biosynthesis; L-leucine biosynthesis; L-leucine from 3-methyl-2-oxobutanoate: step 1/4. Its function is as follows. Catalyzes the condensation of the acetyl group of acetyl-CoA with 3-methyl-2-oxobutanoate (2-ketoisovalerate) to form 3-carboxy-3-hydroxy-4-methylpentanoate (2-isopropylmalate). The protein is 2-isopropylmalate synthase of Renibacterium salmoninarum (strain ATCC 33209 / DSM 20767 / JCM 11484 / NBRC 15589 / NCIMB 2235).